Reading from the N-terminus, the 370-residue chain is Cysteine synthase 1 (370 aa).

The transit peptide at 1 to 16 directs the protein to the mitochondrion; it reads MFRQSVRRFATAALRS. At K73 the chain carries N6-(pyridoxal phosphate)lysine. Residues N103, 209 to 213, and S308 each bind pyridoxal 5'-phosphate; that span reads GTGGT.

It belongs to the cysteine synthase/cystathionine beta-synthase family. It depends on pyridoxal 5'-phosphate as a cofactor.

The protein resides in the mitochondrion. The enzyme catalyses O-succinyl-L-serine + hydrogen sulfide = L-cysteine + succinate. The catalysed reaction is O-acetyl-L-serine + hydrogen sulfide = L-cysteine + acetate. Its pathway is amino-acid biosynthesis; L-cysteine biosynthesis; L-cysteine from L-serine: step 2/2. In terms of biological role, catalyzes the conversion of O-succinyl-L-serine into cysteine, the last step in the cysteine biosynthesis pathway. Can also use O-acetyl-L-serine. The protein is Cysteine synthase 1 of Emericella nidulans (strain FGSC A4 / ATCC 38163 / CBS 112.46 / NRRL 194 / M139) (Aspergillus nidulans).